Reading from the N-terminus, the 466-residue chain is Cocosin 1 (466 aa).

The first 22 residues, 1–22, serve as a signal peptide directing secretion; the sequence is MGSSSLLSFSLCLLLLCHLSQA. Disulfide bonds link Cys45–Cys78 and Cys121–Cys288. Cupin type-1 domains are found at residues 50–242 and 294–443; these read LNAL…ELAR and QNIG…DEAR.

This sequence belongs to the 11S seed storage protein (globulins) family. As to quaternary structure, hexamer; each subunit is composed of an acidic and a basic chain derived from a single precursor and linked by a disulfide bond. Endosperm of the seeds.

Seed storage protein. The polypeptide is Cocosin 1 (Cocos nucifera (Coconut palm)).